The chain runs to 236 residues: Biosynthetic peptidoglycan transglycosylase (236 aa).

Residues 20 to 40 traverse the membrane as a helical segment; sequence GLVVAAVLALIPTMLTFLYLP.

The protein belongs to the glycosyltransferase 51 family.

The protein localises to the cell inner membrane. It catalyses the reaction [GlcNAc-(1-&gt;4)-Mur2Ac(oyl-L-Ala-gamma-D-Glu-L-Lys-D-Ala-D-Ala)](n)-di-trans,octa-cis-undecaprenyl diphosphate + beta-D-GlcNAc-(1-&gt;4)-Mur2Ac(oyl-L-Ala-gamma-D-Glu-L-Lys-D-Ala-D-Ala)-di-trans,octa-cis-undecaprenyl diphosphate = [GlcNAc-(1-&gt;4)-Mur2Ac(oyl-L-Ala-gamma-D-Glu-L-Lys-D-Ala-D-Ala)](n+1)-di-trans,octa-cis-undecaprenyl diphosphate + di-trans,octa-cis-undecaprenyl diphosphate + H(+). Its pathway is cell wall biogenesis; peptidoglycan biosynthesis. In terms of biological role, peptidoglycan polymerase that catalyzes glycan chain elongation from lipid-linked precursors. This is Biosynthetic peptidoglycan transglycosylase from Mesorhizobium japonicum (strain LMG 29417 / CECT 9101 / MAFF 303099) (Mesorhizobium loti (strain MAFF 303099)).